The sequence spans 328 residues: Ribosomal RNA large subunit methyltransferase F (328 aa).

The segment at 1-31 (MTDTRKPPRKKPQRPAKPAAPREKATLHPRN) is disordered.

Belongs to the methyltransferase superfamily. METTL16/RlmF family.

The protein resides in the cytoplasm. It carries out the reaction adenosine(1618) in 23S rRNA + S-adenosyl-L-methionine = N(6)-methyladenosine(1618) in 23S rRNA + S-adenosyl-L-homocysteine + H(+). Its function is as follows. Specifically methylates the adenine in position 1618 of 23S rRNA. The polypeptide is Ribosomal RNA large subunit methyltransferase F (Pseudomonas syringae pv. syringae (strain B728a)).